Consider the following 481-residue polypeptide: 3-isopropylmalate dehydratase large subunit (481 aa).

Residues Cys-363, Cys-423, and Cys-426 each contribute to the [4Fe-4S] cluster site. The segment at 432–459 is disordered; the sequence is DQLKPGERSASTSNRNFEGRQGPGGRTH.

Belongs to the aconitase/IPM isomerase family. LeuC type 1 subfamily. Heterodimer of LeuC and LeuD. It depends on [4Fe-4S] cluster as a cofactor.

It catalyses the reaction (2R,3S)-3-isopropylmalate = (2S)-2-isopropylmalate. Its pathway is amino-acid biosynthesis; L-leucine biosynthesis; L-leucine from 3-methyl-2-oxobutanoate: step 2/4. Its function is as follows. Catalyzes the isomerization between 2-isopropylmalate and 3-isopropylmalate, via the formation of 2-isopropylmaleate. The chain is 3-isopropylmalate dehydratase large subunit from Corynebacterium glutamicum (strain R).